The sequence spans 592 residues: MEKARPQWGHPLQFVFACISYAVGLGNVWRFPYLCQMYGGGSFLVPYIIMLIVEGMPLLYLELAVGQRMRQGSIGAWRTISPYLSGVGVASVVVSFFLSMYYNVINAWGFWYLFHSFQDPLPWSVCPLNSNHTGYDEECEKASSTQYFWYRKTLNISPSIQENGGVQWEPALCLTLAWLMVYLCILRGTESTGKVVYFTASMPYCVLIIYLVRGLTLHGATNGLMYMFTPKMEQLANPKAWINAATQIFFSLGLGFGSLIAFASYNEPSNNCQKHAIIVSIINSSTSIFASIVTFSIYGFKATFNYENCLNKVILLLTNSFDLEDGFLTVSNLEEVKNYLASTYPNKYSEVFPHIRNCSLESELDTAVQGTGLAFIVYTEAIKNMEVSQLWSVLYFFMLLMLGIGSMLGNTAAILTPLTDSKVISSYLPKEAISGLVCLINCAVGMVFTMEAGNYWFDIFNDYAATLSLLLIVLVETIAVCYVYGLKRFESDLRAMTGRTLSWYWKVMWAFVSPLLIVGLFIFYLSDYILTGTLQYQAWDATQGQLVTKDYPPHALAVIGLLVASSTMCIPLVALGTFIRNRLKRGGSAPVA.

At 1-7 (MEKARPQ) the chain is on the cytoplasmic side. A helical transmembrane segment spans residues 8–28 (WGHPLQFVFACISYAVGLGNV). Residues 29–42 (WRFPYLCQMYGGGS) are Extracellular-facing. Residues 43-63 (FLVPYIIMLIVEGMPLLYLEL) traverse the membrane as a helical segment. Residues 64–79 (AVGQRMRQGSIGAWRT) lie on the Cytoplasmic side of the membrane. Residues 80–100 (ISPYLSGVGVASVVVSFFLSM) traverse the membrane as a helical segment. The Extracellular segment spans residues 101–165 (YYNVINAWGF…ISPSIQENGG (65 aa)). The N-linked (GlcNAc...) asparagine glycan is linked to asparagine 131. The chain crosses the membrane as a helical span at residues 166 to 186 (VQWEPALCLTLAWLMVYLCIL). Over 187 to 194 (RGTESTGK) the chain is Cytoplasmic. Residues 195–215 (VVYFTASMPYCVLIIYLVRGL) form a helical membrane-spanning segment. Residues 216-241 (TLHGATNGLMYMFTPKMEQLANPKAW) lie on the Extracellular side of the membrane. The chain crosses the membrane as a helical span at residues 242 to 262 (INAATQIFFSLGLGFGSLIAF). Over 263–276 (ASYNEPSNNCQKHA) the chain is Cytoplasmic. The chain crosses the membrane as a helical span at residues 277–297 (IIVSIINSSTSIFASIVTFSI). The Extracellular segment spans residues 298-389 (YGFKATFNYE…EAIKNMEVSQ (92 aa)). Residues 390 to 410 (LWSVLYFFMLLMLGIGSMLGN) form a helical membrane-spanning segment. Residues 411-431 (TAAILTPLTDSKVISSYLPKE) lie on the Cytoplasmic side of the membrane. Residues 432–452 (AISGLVCLINCAVGMVFTMEA) traverse the membrane as a helical segment. Over 453 to 465 (GNYWFDIFNDYAA) the chain is Extracellular. Residues 466–486 (TLSLLLIVLVETIAVCYVYGL) traverse the membrane as a helical segment. Residues 487–504 (KRFESDLRAMTGRTLSWY) are Cytoplasmic-facing. Residues 505–525 (WKVMWAFVSPLLIVGLFIFYL) traverse the membrane as a helical segment. Over 526–554 (SDYILTGTLQYQAWDATQGQLVTKDYPPH) the chain is Extracellular. A helical transmembrane segment spans residues 555 to 575 (ALAVIGLLVASSTMCIPLVAL). At 576–592 (GTFIRNRLKRGGSAPVA) the chain is on the cytoplasmic side.

It belongs to the sodium:neurotransmitter symporter (SNF) (TC 2.A.22) family. SLC6A20 subfamily. In terms of tissue distribution, expressed in brain, kidney, small intestine, thymus, spleen and lung. In the brain, expressed in cerebellum, cortex and brain stem. Not detected in liver, muscle or heart. In brain, widespread in various regions, including the meninges, choroid plexus, cortex, hippocampus and thalamus.

The protein localises to the apical cell membrane. The enzyme catalyses L-proline(out) + chloride(out) + 2 Na(+)(out) = L-proline(in) + chloride(in) + 2 Na(+)(in). The catalysed reaction is 4-hydroxy-L-proline(out) + chloride(out) + 2 Na(+)(out) = 4-hydroxy-L-proline(in) + chloride(in) + 2 Na(+)(in). It catalyses the reaction 2-methyl-2-(methylamino)propanoate(out) + chloride(out) + 2 Na(+)(out) = 2-methyl-2-(methylamino)propanoate(in) + chloride(in) + 2 Na(+)(in). It carries out the reaction L-pipecolate(out) + chloride(out) + 2 Na(+)(out) = L-pipecolate(in) + chloride(in) + 2 Na(+)(in). The enzyme catalyses glycine betaine(out) + chloride(out) + 2 Na(+)(out) = glycine betaine(in) + chloride(in) + 2 Na(+)(in). The catalysed reaction is glycine(out) + chloride(out) + 2 Na(+)(out) = glycine(in) + chloride(in) + 2 Na(+)(in). Mediates the Na(+)- and Cl(-)-dependent uptake of imino acids such as L-proline, N-methyl-L-proline and pipecolate as well as N-methylated amino acids. Also transports glycine, regulates proline and glycine homeostasis in the brain playing a role in the modulation of NMDAR currents. In Mus musculus (Mouse), this protein is Sodium- and chloride-dependent transporter XTRP3A.